Here is a 110-residue protein sequence, read N- to C-terminus: U1-lycotoxin-Ls1mm (110 aa).

Residues Met1–Ala20 form the signal peptide. The propeptide occupies Glu21–Arg44. Disulfide bonds link Cys47-Cys62, Cys54-Cys71, Cys61-Cys89, and Cys73-Cys87.

Belongs to the neurotoxin 19 (CSTX) family. 03 subfamily. Expressed by the venom gland.

The protein localises to the secreted. The protein is U1-lycotoxin-Ls1mm of Lycosa singoriensis (Wolf spider).